The sequence spans 158 residues: MPRKLPSSPKTSALQLGRAVAWPGSPEEAKLDRVPNPQKGTNYVARFTAPEFTTLCPVTGQPDFAHLVIDYVPGSWLLESKSLKLYLASFRNHGAFHEDCTVAIGKRIATAVRPKWLRIGGYWYPRGGIPIDVFWQTGTVPKGVWIPDQSVPAYRGRG.

The active-site Thioimide intermediate is Cys56. The active-site Proton donor is Asp63. Substrate-binding positions include 78–80 (LES) and 97–98 (HE).

This sequence belongs to the GTP cyclohydrolase I family. QueF type 1 subfamily.

It is found in the cytoplasm. It carries out the reaction 7-aminomethyl-7-carbaguanine + 2 NADP(+) = 7-cyano-7-deazaguanine + 2 NADPH + 3 H(+). The protein operates within tRNA modification; tRNA-queuosine biosynthesis. Catalyzes the NADPH-dependent reduction of 7-cyano-7-deazaguanine (preQ0) to 7-aminomethyl-7-deazaguanine (preQ1). The protein is NADPH-dependent 7-cyano-7-deazaguanine reductase of Nitrobacter hamburgensis (strain DSM 10229 / NCIMB 13809 / X14).